Here is an 850-residue protein sequence, read N- to C-terminus: DNA polymerase I (850 aa).

The region spanning 1-288 (MKLVIFDGNS…SIIKRLGLSE (288 aa)) is the 5'-3' exonuclease domain. The tract at residues 470–850 (VDRDALIQYT…KEGLNWYETK (381 aa)) is polymerase.

Belongs to the DNA polymerase type-A family.

The catalysed reaction is DNA(n) + a 2'-deoxyribonucleoside 5'-triphosphate = DNA(n+1) + diphosphate. In addition to polymerase activity, this DNA polymerase exhibits 3'-5' and 5'-3' exonuclease activity. The sequence is that of DNA polymerase I (polA) from Caldicellulosiruptor bescii (strain ATCC BAA-1888 / DSM 6725 / KCTC 15123 / Z-1320) (Anaerocellum thermophilum).